Here is a 195-residue protein sequence, read N- to C-terminus: Pyridoxal 5'-phosphate synthase subunit PdxT (195 aa).

G46–S48 provides a ligand contact to L-glutamine. Catalysis depends on C78, which acts as the Nucleophile. Residues R105 and I133 to R134 each bind L-glutamine. Residues H169 and E171 each act as charge relay system in the active site.

Belongs to the glutaminase PdxT/SNO family. In terms of assembly, in the presence of PdxS, forms a dodecamer of heterodimers. Only shows activity in the heterodimer.

It catalyses the reaction aldehydo-D-ribose 5-phosphate + D-glyceraldehyde 3-phosphate + L-glutamine = pyridoxal 5'-phosphate + L-glutamate + phosphate + 3 H2O + H(+). The catalysed reaction is L-glutamine + H2O = L-glutamate + NH4(+). It functions in the pathway cofactor biosynthesis; pyridoxal 5'-phosphate biosynthesis. Its function is as follows. Catalyzes the hydrolysis of glutamine to glutamate and ammonia as part of the biosynthesis of pyridoxal 5'-phosphate. The resulting ammonia molecule is channeled to the active site of PdxS. The sequence is that of Pyridoxal 5'-phosphate synthase subunit PdxT from Shouchella clausii (strain KSM-K16) (Alkalihalobacillus clausii).